The primary structure comprises 124 residues: Small ribosomal subunit protein uS12 (124 aa).

Asp89 carries the 3-methylthioaspartic acid modification.

It belongs to the universal ribosomal protein uS12 family. Part of the 30S ribosomal subunit. Contacts proteins S8 and S17. May interact with IF1 in the 30S initiation complex.

Its function is as follows. With S4 and S5 plays an important role in translational accuracy. Interacts with and stabilizes bases of the 16S rRNA that are involved in tRNA selection in the A site and with the mRNA backbone. Located at the interface of the 30S and 50S subunits, it traverses the body of the 30S subunit contacting proteins on the other side and probably holding the rRNA structure together. The combined cluster of proteins S8, S12 and S17 appears to hold together the shoulder and platform of the 30S subunit. The sequence is that of Small ribosomal subunit protein uS12 from Shewanella sp. (strain ANA-3).